The sequence spans 357 residues: Large ribosomal subunit protein uL10 (357 aa).

Residues 311–357 (MVSRSAEAAERKEKEEEEEEEAEEEEAEEEEEEEEEEAAAGLGALFG) are disordered. Residues 325-348 (EEEEEEEAEEEEAEEEEEEEEEEA) show a composition bias toward acidic residues.

It belongs to the universal ribosomal protein uL10 family. Part of the 50S ribosomal subunit. Forms part of the ribosomal stalk which helps the ribosome interact with GTP-bound translation factors. Forms a heptameric L10(L12)2(L12)2(L12)2 complex, where L10 forms an elongated spine to which the L12 dimers bind in a sequential fashion.

Functionally, forms part of the ribosomal stalk, playing a central role in the interaction of the ribosome with GTP-bound translation factors. The sequence is that of Large ribosomal subunit protein uL10 from Methanopyrus kandleri (strain AV19 / DSM 6324 / JCM 9639 / NBRC 100938).